Here is a 374-residue protein sequence, read N- to C-terminus: uncharacterized protein (374 aa).

Residues Pro-182–Val-201 are disordered. A compositionally biased stretch (polar residues) spans Pro-188–Ser-197.

This is an uncharacterized protein from Rattus norvegicus (Rat).